Consider the following 313-residue polypeptide: Foldase protein PrsA (313 aa).

The signal sequence occupies residues 1 to 20 (MKKKLLAGAITLLSVATLAA). The N-palmitoyl cysteine moiety is linked to residue Cys21. A lipid anchor (S-diacylglycerol cysteine) is attached at Cys21. The PpiC domain maps to 143–241 (TPDVTAQIIR…SQYYIVKLTK (99 aa)).

It belongs to the PrsA family.

Its subcellular location is the cell membrane. It carries out the reaction [protein]-peptidylproline (omega=180) = [protein]-peptidylproline (omega=0). Functionally, plays a major role in protein secretion by helping the post-translocational extracellular folding of several secreted proteins. The sequence is that of Foldase protein PrsA from Streptococcus pneumoniae serotype 4 (strain ATCC BAA-334 / TIGR4).